We begin with the raw amino-acid sequence, 152 residues long: Lipoprotein signal peptidase (152 aa).

Helical transmembrane passes span Leu5–Val25, Trp61–His81, and Leu84–Ile104. Catalysis depends on residues Asp114 and Asp130. A helical membrane pass occupies residues Ile125 to Trp145.

It belongs to the peptidase A8 family.

Its subcellular location is the cell membrane. The catalysed reaction is Release of signal peptides from bacterial membrane prolipoproteins. Hydrolyzes -Xaa-Yaa-Zaa-|-(S,diacylglyceryl)Cys-, in which Xaa is hydrophobic (preferably Leu), and Yaa (Ala or Ser) and Zaa (Gly or Ala) have small, neutral side chains.. It participates in protein modification; lipoprotein biosynthesis (signal peptide cleavage). This protein specifically catalyzes the removal of signal peptides from prolipoproteins. This chain is Lipoprotein signal peptidase, found in Streptococcus pyogenes serotype M6 (strain ATCC BAA-946 / MGAS10394).